Reading from the N-terminus, the 426-residue chain is Aspartate aminotransferase, mitochondrial (426 aa).

Residues 1–29 constitute a mitochondrion transit peptide; the sequence is MIRSARLISNIKFGQKNIRQFSTNTNWWA. Residues Gly60, Trp156, and Asn209 each contribute to the substrate site. An N6-(pyridoxal phosphate)lysine modification is found at Lys273. Residue Arg401 coordinates substrate.

The protein belongs to the class-I pyridoxal-phosphate-dependent aminotransferase family. As to quaternary structure, homodimer. Requires pyridoxal 5'-phosphate as cofactor.

The protein resides in the mitochondrion matrix. It is found in the cell membrane. The enzyme catalyses L-aspartate + 2-oxoglutarate = oxaloacetate + L-glutamate. The catalysed reaction is L-kynurenine + 2-oxoglutarate = kynurenate + L-glutamate + H2O. Its function is as follows. Plays a key role in amino acid metabolism. Important for metabolite exchange between mitochondria and cytosol. This is Aspartate aminotransferase, mitochondrial (aatA) from Dictyostelium discoideum (Social amoeba).